A 503-amino-acid chain; its full sequence is Maturase K (503 aa).

This sequence belongs to the intron maturase 2 family. MatK subfamily.

It localises to the plastid. Its subcellular location is the chloroplast. Its function is as follows. Usually encoded in the trnK tRNA gene intron. Probably assists in splicing its own and other chloroplast group II introns. This chain is Maturase K, found in Rosa canina (Dog rose).